The sequence spans 235 residues: Putative cobalt transport protein CbiM 2 (235 aa).

A run of 7 helical transmembrane segments spans residues 9 to 29 (PAGW…MGII), 41 to 61 (YLPL…LKLP), 80 to 100 (FGYC…ALLL), 107 to 127 (TMGA…YAVY), 135 to 155 (INIY…TYII), 160 to 180 (LALA…AFFS), and 181 to 201 (IFAI…ALVF).

The protein belongs to the CbiM family. In terms of assembly, forms an energy-coupling factor (ECF) transporter complex composed of an ATP-binding protein (A component, CbiO), a transmembrane protein (T component, CbiQ) and 2 possible substrate-capture proteins (S components, CbiM and CbiN) of unknown stoichimetry.

Its subcellular location is the cell membrane. It functions in the pathway cofactor biosynthesis; adenosylcobalamin biosynthesis. In terms of biological role, part of the energy-coupling factor (ECF) transporter complex CbiMNOQ involved in cobalt import. The chain is Putative cobalt transport protein CbiM 2 from Methanosphaerula palustris (strain ATCC BAA-1556 / DSM 19958 / E1-9c).